Here is a 395-residue protein sequence, read N- to C-terminus: Renin (395 aa).

The N-terminal stretch at 1–21 is a signal peptide; it reads MLRSWEFVLLISCFLCFSSDA. Residues 22 to 43 constitute a propeptide, activation peptide; sequence LQRISLKKMPSIRETLQEMGMK. N-linked (GlcNAc...) asparagine glycosylation is present at asparagine 64. Positions 79–392 constitute a Peptidase A1 domain; the sequence is YYGEISIGTP…DRQNNRIGFA (314 aa). Aspartate 97 is a catalytic residue. Intrachain disulfides connect cysteine 110/cysteine 117 and cysteine 274/cysteine 278. Residue aspartate 283 is part of the active site. Residues cysteine 316 and cysteine 351 are joined by a disulfide bond.

This sequence belongs to the peptidase A1 family. N-glycosylated. As to expression, expressed by the venom gland (at protein level).

It is found in the secreted. The enzyme catalyses Cleavage of Leu-|-Xaa bond in angiotensinogen to generate angiotensin I.. Inhibited completely by aspartyl protease inhibitor pepstatin A, but not by the serine- or metalloproteinase inhibitors PMSF or EDTA. In terms of biological role, renin is a highly specific endopeptidase, whose only known function is to generate angiotensin I from angiotensinogen in the plasma, initiating a cascade of reactions that produce an elevation of blood pressure and increased sodium retention by the kidney. This protein is also found in snake venom and shown to specifically cleave human and porcine angiotensinogen into angiotensin I. It does not have general protease activity, no cleavage of alpha or beta casein. May be directly responsible for elevation of blood pressure in the victims of envenomation. This is Renin from Echis ocellatus (Ocellated saw-scaled viper).